Consider the following 122-residue polypeptide: Putative iron-sulfur cluster insertion protein ErpA (122 aa).

Iron-sulfur cluster-binding residues include Cys50, Cys114, and Cys116.

It belongs to the HesB/IscA family. As to quaternary structure, homodimer. The cofactor is iron-sulfur cluster.

Its function is as follows. Required for insertion of 4Fe-4S clusters. The protein is Putative iron-sulfur cluster insertion protein ErpA of Cupriavidus necator (strain ATCC 17699 / DSM 428 / KCTC 22496 / NCIMB 10442 / H16 / Stanier 337) (Ralstonia eutropha).